The chain runs to 363 residues: MAGNSFGERFKITTFGESHGPALGAIVDGCPPGLEISEEDLQVELDRRKPGTSRYTTQRREPDQVKILSGVFEGKTTGTTIGLLIENTDQKSKDYSNIAGTFRPGHADYTYTQKYGFRDYRGGGRSSARETAMRVAGGAIARKFLEQRLGIRIYGGCTQIGDVKAESLDWSTVNNNPFFFPDESKVPALEDLINALRKDGSSIGARVEVFADGVPPGWGEPVFDRIDADLAKAMMSINAVKGVEIGDGFAVVNQRGEQHRDEMTPQGFLSNHSGGVLGGISSGQTMRVAMALKPTSSILIAGKSIGLNGEAAEVVTKGRHDPCVGVRATPIAEAMLAIVLLDHYLRHRGQNADVVPPFPPIPG.

NADP(+) is bound by residues arginine 48 and arginine 54. FMN contacts are provided by residues 125–127 (RSS), 238–239 (NA), glycine 278, 293–297 (KPTSS), and arginine 319.

This sequence belongs to the chorismate synthase family. Homotetramer. Requires FMNH2 as cofactor.

The catalysed reaction is 5-O-(1-carboxyvinyl)-3-phosphoshikimate = chorismate + phosphate. It participates in metabolic intermediate biosynthesis; chorismate biosynthesis; chorismate from D-erythrose 4-phosphate and phosphoenolpyruvate: step 7/7. Catalyzes the anti-1,4-elimination of the C-3 phosphate and the C-6 proR hydrogen from 5-enolpyruvylshikimate-3-phosphate (EPSP) to yield chorismate, which is the branch point compound that serves as the starting substrate for the three terminal pathways of aromatic amino acid biosynthesis. This reaction introduces a second double bond into the aromatic ring system. The sequence is that of Chorismate synthase from Alcanivorax borkumensis (strain ATCC 700651 / DSM 11573 / NCIMB 13689 / SK2).